The chain runs to 218 residues: N-(5'-phosphoribosyl)anthranilate isomerase (218 aa).

This sequence belongs to the TrpF family.

It carries out the reaction N-(5-phospho-beta-D-ribosyl)anthranilate = 1-(2-carboxyphenylamino)-1-deoxy-D-ribulose 5-phosphate. It functions in the pathway amino-acid biosynthesis; L-tryptophan biosynthesis; L-tryptophan from chorismate: step 3/5. This chain is N-(5'-phosphoribosyl)anthranilate isomerase, found in Stenotrophomonas maltophilia (strain K279a).